The chain runs to 845 residues: Protein TSD2 (845 aa).

The tract at residues 193–283 (DVDSDSESDS…SASATRLTNA (91 aa)) is disordered. Composition is skewed to basic and acidic residues over residues 202-212 (SDSHSDSHSDS) and 230-242 (ARSH…DGSG). Over residues 243-272 (GKRKRGSHSPLSRRRQRHKQGQRHKPRHRS) the composition is skewed to basic residues.

It belongs to the CDC45 family.

It is found in the nucleus. Functionally, temperature-sensitive protein required for DNA synthesis. May be a transcription factor that regulates the level or influences the stability of DNA polymerases or auxiliary proteins. The sequence is that of Protein TSD2 (TSD2) from Mycosarcoma maydis (Corn smut fungus).